Here is a 156-residue protein sequence, read N- to C-terminus: ATP synthase subunit b (156 aa).

Residues I3–T23 form a helical membrane-spanning segment.

The protein belongs to the ATPase B chain family. F-type ATPases have 2 components, F(1) - the catalytic core - and F(0) - the membrane proton channel. F(1) has five subunits: alpha(3), beta(3), gamma(1), delta(1), epsilon(1). F(0) has three main subunits: a(1), b(2) and c(10-14). The alpha and beta chains form an alternating ring which encloses part of the gamma chain. F(1) is attached to F(0) by a central stalk formed by the gamma and epsilon chains, while a peripheral stalk is formed by the delta and b chains.

The protein localises to the cell inner membrane. F(1)F(0) ATP synthase produces ATP from ADP in the presence of a proton or sodium gradient. F-type ATPases consist of two structural domains, F(1) containing the extramembraneous catalytic core and F(0) containing the membrane proton channel, linked together by a central stalk and a peripheral stalk. During catalysis, ATP synthesis in the catalytic domain of F(1) is coupled via a rotary mechanism of the central stalk subunits to proton translocation. Its function is as follows. Component of the F(0) channel, it forms part of the peripheral stalk, linking F(1) to F(0). The polypeptide is ATP synthase subunit b (Xanthomonas oryzae pv. oryzae (strain MAFF 311018)).